The following is an 866-amino-acid chain: Primer-independent DNA polymerase PolB (866 aa).

The exonuclease domain stretch occupies residues 50-286 (SDLTLHIGFD…DRVPATIGAM (237 aa)). The palm1 domain stretch occupies residues 287 to 385 (AVSRFTKTLK…GLLDILTPDY (99 aa)). The tract at residues 386 to 481 (GNIRLSKNPD…NSESTSVFLP (96 aa)) is TPR1 domain. Residues 482 to 522 (FVQQVRENRNRHIKGSLEEKFWKEIGNSLYGKLAQGLRAKT) form a fingers domain region. A TPR2 domain region spans residues 523–549 (AFDTARGLNRSLPPSSVTQPFFAAHVT). The interval 550–678 (GFIRAVVGEL…PGQTLSRSTL (129 aa)) is palm2 domain. A thumb domain region spans residues 679–866 (ISTREMWLSE…RKYPTFCLPV (188 aa)).

Mn(2+) serves as cofactor.

The enzyme catalyses DNA(n) + a 2'-deoxyribonucleoside 5'-triphosphate = DNA(n+1) + diphosphate. DNA polymerase with primer-independent templated DNA polymerization activity, primer-dependent DNA polymerization activity with strand displacement, translesion synthesis activity across non-bulky base damage, 3'-5' exodeoxyribonuclease activity, and de novo primer synthesis activity. The enzyme is processive and faithful. Translation synthesis across abasic sites is coupled to de novo primer synthesis. Overexpression of wild-type protein increases survival of cells upon mitomycin C or UV treatment. In Escherichia coli, this protein is Primer-independent DNA polymerase PolB (pi-polB).